Consider the following 479-residue polypeptide: Aspartyl/glutamyl-tRNA(Asn/Gln) amidotransferase subunit B (479 aa).

The protein belongs to the GatB/GatE family. GatB subfamily. As to quaternary structure, heterotrimer of A, B and C subunits.

The catalysed reaction is L-glutamyl-tRNA(Gln) + L-glutamine + ATP + H2O = L-glutaminyl-tRNA(Gln) + L-glutamate + ADP + phosphate + H(+). It catalyses the reaction L-aspartyl-tRNA(Asn) + L-glutamine + ATP + H2O = L-asparaginyl-tRNA(Asn) + L-glutamate + ADP + phosphate + 2 H(+). In terms of biological role, allows the formation of correctly charged Asn-tRNA(Asn) or Gln-tRNA(Gln) through the transamidation of misacylated Asp-tRNA(Asn) or Glu-tRNA(Gln) in organisms which lack either or both of asparaginyl-tRNA or glutaminyl-tRNA synthetases. The reaction takes place in the presence of glutamine and ATP through an activated phospho-Asp-tRNA(Asn) or phospho-Glu-tRNA(Gln). In Myxococcus xanthus (strain DK1622), this protein is Aspartyl/glutamyl-tRNA(Asn/Gln) amidotransferase subunit B.